A 491-amino-acid chain; its full sequence is Fatty acyl-CoA reductase 1 (491 aa).

This sequence belongs to the fatty acyl-CoA reductase family. Expressed in the endodermal cell layer surrounding the central vasculature in roots. Expressed in the hilum region of seeds. Expressed in lateral root tips, cotyledons, the shoot apex, young leaves, petals, stamen filaments, and receptacle of siliques.

It catalyses the reaction a long-chain fatty acyl-CoA + 2 NADPH + 2 H(+) = a long-chain primary fatty alcohol + 2 NADP(+) + CoA. Catalyzes the reduction of fatty acyl-CoA to fatty alcohols. Catalyzes specifically the formation of C18:0 and C22:0 fatty alcohols. Provides the fatty alcohols required for synthesis of suberin in roots, seed coat and wound-induced leaf tissue. Provides the fatty alcohols required for synthesis of alkyl hydroxycinnamates in root waxes. This chain is Fatty acyl-CoA reductase 1, found in Arabidopsis thaliana (Mouse-ear cress).